A 126-amino-acid chain; its full sequence is Profilin-1 (126 aa).

Belongs to the profilin family. In terms of assembly, occurs in many kinds of cells as a complex with monomeric actin in a 1:1 ratio.

It localises to the cytoplasm. The protein resides in the cytoskeleton. Functionally, binds to actin and affects the structure of the cytoskeleton. At high concentrations, profilin prevents the polymerization of actin, whereas it enhances it at low concentrations. By binding to PIP2, it inhibits the formation of IP3 and DG. In Dictyostelium discoideum (Social amoeba), this protein is Profilin-1 (proA).